A 32-amino-acid polypeptide reads, in one-letter code: Hyaluronidase-Pk1a (32 aa).

A glycan (N-linked (GlcNAc...) asparagine) is linked at Asn23.

Belongs to the glycosyl hydrolase 56 family. As to expression, expressed by the venom gland.

It is found in the secreted. It carries out the reaction Random hydrolysis of (1-&gt;4)-linkages between N-acetyl-beta-D-glucosamine and D-glucuronate residues in hyaluronate.. Functionally, hydrolyzes high molecular weight hyaluronic acid to produce small oligosaccharides. In Phoneutria keyserlingi (Brazilian wandering spider), this protein is Hyaluronidase-Pk1a.